Reading from the N-terminus, the 268-residue chain is Shikimate dehydrogenase (NADP(+)) (268 aa).

Shikimate contacts are provided by residues Ser-13–Ser-15 and Thr-60. Residue Lys-64 is the Proton acceptor of the active site. Glu-76 is a binding site for NADP(+). Positions 85 and 100 each coordinate shikimate. NADP(+) contacts are provided by residues Gly-124–Ala-128, Asn-148–Arg-153, and Ile-209. Tyr-211 is a shikimate binding site. Gly-232 lines the NADP(+) pocket.

The protein belongs to the shikimate dehydrogenase family. As to quaternary structure, homodimer.

It catalyses the reaction shikimate + NADP(+) = 3-dehydroshikimate + NADPH + H(+). The protein operates within metabolic intermediate biosynthesis; chorismate biosynthesis; chorismate from D-erythrose 4-phosphate and phosphoenolpyruvate: step 4/7. Its function is as follows. Involved in the biosynthesis of the chorismate, which leads to the biosynthesis of aromatic amino acids. Catalyzes the reversible NADPH linked reduction of 3-dehydroshikimate (DHSA) to yield shikimate (SA). The sequence is that of Shikimate dehydrogenase (NADP(+)) from Staphylococcus aureus (strain JH1).